Reading from the N-terminus, the 610-residue chain is Elongation factor 4 (610 aa).

The tr-type G domain occupies 11–193 (EKIRNFSIIA…QIVEKVPAPT (183 aa)). Residues 23 to 28 (DHGKST) and 140 to 143 (NKID) each bind GTP.

The protein belongs to the TRAFAC class translation factor GTPase superfamily. Classic translation factor GTPase family. LepA subfamily.

It is found in the cell membrane. The enzyme catalyses GTP + H2O = GDP + phosphate + H(+). Its function is as follows. Required for accurate and efficient protein synthesis under certain stress conditions. May act as a fidelity factor of the translation reaction, by catalyzing a one-codon backward translocation of tRNAs on improperly translocated ribosomes. Back-translocation proceeds from a post-translocation (POST) complex to a pre-translocation (PRE) complex, thus giving elongation factor G a second chance to translocate the tRNAs correctly. Binds to ribosomes in a GTP-dependent manner. The chain is Elongation factor 4 from Streptococcus pyogenes serotype M6 (strain ATCC BAA-946 / MGAS10394).